A 286-amino-acid polypeptide reads, in one-letter code: Ribosomal RNA small subunit methyltransferase A (286 aa).

S-adenosyl-L-methionine-binding residues include Asn-28, Leu-30, Gly-55, Glu-77, Asp-103, and Asn-123.

It belongs to the class I-like SAM-binding methyltransferase superfamily. rRNA adenine N(6)-methyltransferase family. RsmA subfamily.

Its subcellular location is the cytoplasm. It carries out the reaction adenosine(1518)/adenosine(1519) in 16S rRNA + 4 S-adenosyl-L-methionine = N(6)-dimethyladenosine(1518)/N(6)-dimethyladenosine(1519) in 16S rRNA + 4 S-adenosyl-L-homocysteine + 4 H(+). In terms of biological role, specifically dimethylates two adjacent adenosines (A1518 and A1519) in the loop of a conserved hairpin near the 3'-end of 16S rRNA in the 30S particle. May play a critical role in biogenesis of 30S subunits. The polypeptide is Ribosomal RNA small subunit methyltransferase A (Bradyrhizobium sp. (strain BTAi1 / ATCC BAA-1182)).